An 84-amino-acid chain; its full sequence is Small ribosomal subunit protein bS18 (84 aa).

This sequence belongs to the bacterial ribosomal protein bS18 family. Part of the 30S ribosomal subunit. Forms a tight heterodimer with protein bS6.

Functionally, binds as a heterodimer with protein bS6 to the central domain of the 16S rRNA, where it helps stabilize the platform of the 30S subunit. This Clostridium kluyveri (strain NBRC 12016) protein is Small ribosomal subunit protein bS18.